The primary structure comprises 296 residues: dTDP-rhamnosyl transferase RfbF (296 aa).

It belongs to the glycosyltransferase 2 family.

Its pathway is bacterial outer membrane biogenesis; lipopolysaccharide biosynthesis. This Shigella flexneri protein is dTDP-rhamnosyl transferase RfbF (rfbF).